We begin with the raw amino-acid sequence, 236 residues long: uncharacterized protein (236 aa).

The next 7 membrane-spanning stretches (helical) occupy residues 32–52 (MALA…VEPI), 61–81 (FGTI…MGFG), 90–110 (ILFW…ALIY), 115–135 (IART…YGYS), 144–164 (GSFF…NLFL), 167–187 (SSLS…LIAW), and 208–228 (LSIM…LYLM).

This sequence belongs to the BI1 family.

It is found in the cell membrane. This is an uncharacterized protein from Rickettsia prowazekii (strain Madrid E).